A 473-amino-acid polypeptide reads, in one-letter code: Adhesive plaque matrix protein 2 (473 aa).

An N-terminal signal peptide occupies residues 1-17 (MLFSFFLLLTCTQLCLG). A 3',4'-dihydroxyphenylalanine mark is found at Tyr-23, Tyr-31, Tyr-36, and Tyr-43. 11 EGF-like domains span residues 45-81 (PVNP…YNCN), 82-117 (LKNA…GRLC), 118-154 (EKNV…GPRC), 155-191 (EVHA…GPTC), 192-228 (QENA…GPEC), 229-265 (ERYV…GPTC), 266-301 (KVNV…GPTC), 302-340 (GENV…PTCE), 342-378 (KPNP…RHCT), 383-420 (KPNP…RHCT), and 425-461 (KKNP…RYCS). 33 disulfides stabilise this stretch: Cys-49/Cys-60, Cys-54/Cys-69, Cys-71/Cys-80, Cys-86/Cys-97, Cys-91/Cys-106, Cys-108/Cys-117, Cys-122/Cys-133, Cys-127/Cys-143, Cys-145/Cys-154, Cys-159/Cys-170, Cys-164/Cys-180, Cys-182/Cys-191, Cys-196/Cys-207, Cys-201/Cys-217, Cys-219/Cys-228, Cys-233/Cys-244, Cys-238/Cys-254, Cys-256/Cys-265, Cys-270/Cys-281, Cys-275/Cys-290, Cys-292/Cys-301, Cys-306/Cys-317, Cys-311/Cys-328, Cys-330/Cys-339, Cys-346/Cys-357, Cys-351/Cys-366, Cys-368/Cys-377, Cys-387/Cys-399, Cys-393/Cys-408, Cys-410/Cys-419, Cys-429/Cys-440, Cys-434/Cys-449, and Cys-451/Cys-460. N-linked (GlcNAc...) asparagine glycosylation occurs at Asn-93.

Post-translationally, contains L-DOPA (3',4'-dihydroxyphenylalanine). As to expression, produced by the byssal gland.

The protein resides in the secreted. Provides adhesiveness to the mussel's foot. Mussels produce one of the strongest water insoluble glues. The mussel's adhesive is a bundle of threads, called a byssus, formed by a fibrous collagenous core coated with adhesive proteins. This is Adhesive plaque matrix protein 2 (FP2) from Mytilus galloprovincialis (Mediterranean mussel).